The sequence spans 225 residues: Small ribosomal subunit protein uS3 (225 aa).

The region spanning 39–109 (IYRFFNKFTR…ELKLNIEVVN (71 aa)) is the KH type-2 domain.

Belongs to the universal ribosomal protein uS3 family. In terms of assembly, part of the 30S ribosomal subunit. Forms a tight complex with proteins S10 and S14.

Binds the lower part of the 30S subunit head. Binds mRNA in the 70S ribosome, positioning it for translation. The chain is Small ribosomal subunit protein uS3 from Mycoplasma mobile (strain ATCC 43663 / 163K / NCTC 11711) (Mesomycoplasma mobile).